The primary structure comprises 427 residues: Serine--tRNA ligase (427 aa).

231–233 contributes to the L-serine binding site; sequence TAE. 262-264 is a binding site for ATP; sequence RSE. Glu-285 is an L-serine binding site. 349–352 serves as a coordination point for ATP; sequence EISS. Ser-385 lines the L-serine pocket.

The protein belongs to the class-II aminoacyl-tRNA synthetase family. Type-1 seryl-tRNA synthetase subfamily. In terms of assembly, homodimer. The tRNA molecule binds across the dimer.

The protein localises to the cytoplasm. It catalyses the reaction tRNA(Ser) + L-serine + ATP = L-seryl-tRNA(Ser) + AMP + diphosphate + H(+). The enzyme catalyses tRNA(Sec) + L-serine + ATP = L-seryl-tRNA(Sec) + AMP + diphosphate + H(+). Its pathway is aminoacyl-tRNA biosynthesis; selenocysteinyl-tRNA(Sec) biosynthesis; L-seryl-tRNA(Sec) from L-serine and tRNA(Sec): step 1/1. Functionally, catalyzes the attachment of serine to tRNA(Ser). Is also able to aminoacylate tRNA(Sec) with serine, to form the misacylated tRNA L-seryl-tRNA(Sec), which will be further converted into selenocysteinyl-tRNA(Sec). The protein is Serine--tRNA ligase of Brucella canis (strain ATCC 23365 / NCTC 10854 / RM-666).